Consider the following 260-residue polypeptide: Acetylglutamate kinase (260 aa).

Substrate contacts are provided by residues 46 to 47 (GG), R68, and N160.

This sequence belongs to the acetylglutamate kinase family. ArgB subfamily.

It localises to the cytoplasm. The enzyme catalyses N-acetyl-L-glutamate + ATP = N-acetyl-L-glutamyl 5-phosphate + ADP. It participates in amino-acid biosynthesis; L-arginine biosynthesis; N(2)-acetyl-L-ornithine from L-glutamate: step 2/4. Catalyzes the ATP-dependent phosphorylation of N-acetyl-L-glutamate. The chain is Acetylglutamate kinase from Shewanella sp. (strain MR-7).